A 339-amino-acid chain; its full sequence is Tetraacyldisaccharide 4'-kinase (339 aa).

58-65 lines the ATP pocket; sequence TVGGSGKT.

This sequence belongs to the LpxK family.

It carries out the reaction a lipid A disaccharide + ATP = a lipid IVA + ADP + H(+). It participates in glycolipid biosynthesis; lipid IV(A) biosynthesis; lipid IV(A) from (3R)-3-hydroxytetradecanoyl-[acyl-carrier-protein] and UDP-N-acetyl-alpha-D-glucosamine: step 6/6. Its function is as follows. Transfers the gamma-phosphate of ATP to the 4'-position of a tetraacyldisaccharide 1-phosphate intermediate (termed DS-1-P) to form tetraacyldisaccharide 1,4'-bis-phosphate (lipid IVA). The polypeptide is Tetraacyldisaccharide 4'-kinase (Shewanella baltica (strain OS195)).